The following is a 64-amino-acid chain: H/ACA ribonucleoprotein complex subunit 3 (64 aa).

The protein belongs to the NOP10 family. Component of the box H/ACA small nucleolar ribonucleoprotein (H/ACA snoRNP) complex consisting of Nop60B, Gar1, NPH2 and Nop10, and associated with H/ACA-type snoRNAs.

It is found in the nucleus. Its subcellular location is the nucleolus. Its function is as follows. Component of the box H/ACA small nucleolar ribonucleoprotein (H/ACA snoRNP) complex, which catalyzes pseudouridylation of rRNA. This involves the isomerization of uridine such that the ribose is subsequently attached to C5, instead of the normal N1. Pseudouridine ('psi') residues may serve to stabilize the conformation of rRNAs. Required for ribosome biogenesis. H/ACA snoRNP complex-dependent ribosome biogenesis is important in female germline cell differentiation during oogenesis. This chain is H/ACA ribonucleoprotein complex subunit 3, found in Drosophila melanogaster (Fruit fly).